The following is an 859-amino-acid chain: Toll-like receptor 5 (859 aa).

Residues 1 to 26 form the signal peptide; the sequence is MACQLDLLIGVIFMASPVLVISPCSS. Residues 27–641 are Extracellular-facing; it reads DGRIAFFRGC…EEEAMRSLKF (615 aa). Asn37, Asn46, and Asn84 each carry an N-linked (GlcNAc...) asparagine glycan. LRR repeat units lie at residues 45–69, 72–94, 96–118, 121–144, 147–167, 172–193, 198–212, 215–230, and 235–236; these read LNTTTERLLLSFNYISMVVATSFPL, RLQLLELGTQYANLTIGPGAFRN, PNLRILDLGQSQIEVLNRDAFQG, HLLELRLFSCGLSSAVLSDGYFRN, SLARLDLSGNQIHSLRLHSSF, SLSDVNFAFNQIFTICEDELEP, TLSFFGLKLTKLFSR, VGWETCRNPFRGVRLE, and SE. The N-linked (GlcNAc...) asparagine glycan is linked to Asn246. LRR repeat units follow at residues 261–285, 290–302, 314–335, 338–356, 386–402, and 413–432; these read LKHHIMGPGFGFQNIRDPDQSTFAS, SVLQLDLSHGFIF, DLKMLNLAFNKINKIGENAFYG, SLQVLNLSYNLLGELYNSN, TLQTLDLRDNALKAIGF, and GNKLVHLPHIHFTANFLELS. Residue Asn343 is glycosylated (N-linked (GlcNAc...) asparagine). A glycan (N-linked (GlcNAc...) asparagine) is linked at Asn438. LRR repeat units follow at residues 450–471, 475–496, 504–525, 528–547, and 550–568; these read QLQFLILNQNRLSSCKAAHTPS, SLEQLFLTENMLQLAWETGLCW, RLQILYLSNNYLNFLPPGIFND, ALRMLSLSANKLTVLSPGSL, and NLEILDISRNQLLCPDPAL. The LRRCT domain maps to 580–632; it reads NEFVCNCELSTFISWLNQTNVTLFGSPADVYCMYPNSLLGGSLYNISTEDCDE. Intrachain disulfides connect Cys584-Cys611 and Cys586-Cys630. N-linked (GlcNAc...) asparagine glycosylation is found at Asn596, Asn599, and Asn624. Residues 642-662 traverse the membrane as a helical segment; that stretch reads SLFILCTVTLTLFLVITLVVI. The Cytoplasmic segment spans residues 663 to 859; that stretch reads KFRGICFLCY…IQLRTIATIS (197 aa). Residues 692–837 form the TIR domain; that stretch reads YRYDAYFCFS…WFLDKLSGCI (146 aa). Tyr799 is modified (phosphotyrosine).

Belongs to the Toll-like receptor family. In terms of assembly, homodimer. Interacts with MYD88 (via TIR domain). Interacts with TICAM1 (via TIR domain). Interacts with UNC93B1; this interaction is essential for proper TLR5 localization to the plasma membrane. Post-translationally, phosphorylated at Tyr-799 upon flagellin binding; required for signaling. In terms of tissue distribution, highly expressed in liver. Detected in lung and at very low levels in most other tissues.

The protein resides in the membrane. In terms of biological role, pattern recognition receptor (PRR) located on the cell surface that participates in the activation of innate immunity and inflammatory response. Recognizes small molecular motifs named pathogen-associated molecular pattern (PAMPs) expressed by pathogens and microbe-associated molecular patterns (MAMPs) usually expressed by resident microbiota. Upon ligand binding such as bacterial flagellins, recruits intracellular adapter proteins MYD88 and TRIF leading to NF-kappa-B activation, cytokine secretion and induction of the inflammatory response. Plays thereby an important role in the relationship between the intestinal epithelium and enteric microbes and contributes to the gut microbiota composition throughout life. This Mus musculus (Mouse) protein is Toll-like receptor 5 (Tlr5).